A 485-amino-acid chain; its full sequence is NADH-quinone oxidoreductase subunit N (485 aa).

14 helical membrane passes run 8–28, 35–55, 75–95, 105–125, 127–147, 159–179, 203–223, 235–255, 271–291, 297–317, 326–346, 374–394, 407–426, and 449–469; these read LIAL…MLCI, FVNA…LYFV, FYTG…YPWL, FYLL…ANHL, SLFI…GYAF, YMLL…LIYA, LLAG…LVPF, PAPV…GAVM, IVLG…AVSQ, LLGY…IAVQ, VGVY…VVSL, AVMT…GFFG, LWWL…YYYL, and ALTA…FFGL.

This sequence belongs to the complex I subunit 2 family. As to quaternary structure, NDH-1 is composed of 13 different subunits. Subunits NuoA, H, J, K, L, M, N constitute the membrane sector of the complex.

The protein localises to the cell inner membrane. The catalysed reaction is a quinone + NADH + 5 H(+)(in) = a quinol + NAD(+) + 4 H(+)(out). Its function is as follows. NDH-1 shuttles electrons from NADH, via FMN and iron-sulfur (Fe-S) centers, to quinones in the respiratory chain. The immediate electron acceptor for the enzyme in this species is believed to be ubiquinone. Couples the redox reaction to proton translocation (for every two electrons transferred, four hydrogen ions are translocated across the cytoplasmic membrane), and thus conserves the redox energy in a proton gradient. This Pectobacterium carotovorum subsp. carotovorum (strain PC1) protein is NADH-quinone oxidoreductase subunit N.